Consider the following 349-residue polypeptide: Nuclear distribution protein nudE homolog 1-A (349 aa).

Residues 22-189 (VAMKYKQCSE…ELAVQQKQEK (168 aa)) adopt a coiled-coil conformation.

It belongs to the nudE family. In terms of assembly, self-associates. Interacts with pafah1b1. In terms of processing, phosphorylated in mitosis.

The protein localises to the cytoplasm. Its subcellular location is the cytoskeleton. It is found in the microtubule organizing center. The protein resides in the centrosome. It localises to the spindle. The protein localises to the chromosome. Its subcellular location is the centromere. It is found in the kinetochore. The protein resides in the cleavage furrow. It localises to the cytoplasmic vesicle membrane. In terms of biological role, required for centrosome duplication and formation and function of the mitotic spindle. In Xenopus laevis (African clawed frog), this protein is Nuclear distribution protein nudE homolog 1-A (nde1-a).